A 236-amino-acid polypeptide reads, in one-letter code: Biosynthetic peptidoglycan transglycosylase (236 aa).

The chain crosses the membrane as a helical span at residues 12 to 31 (ALLWFVAGSIVLVLVFRWVP).

The protein belongs to the glycosyltransferase 51 family.

The protein localises to the cell inner membrane. It carries out the reaction [GlcNAc-(1-&gt;4)-Mur2Ac(oyl-L-Ala-gamma-D-Glu-L-Lys-D-Ala-D-Ala)](n)-di-trans,octa-cis-undecaprenyl diphosphate + beta-D-GlcNAc-(1-&gt;4)-Mur2Ac(oyl-L-Ala-gamma-D-Glu-L-Lys-D-Ala-D-Ala)-di-trans,octa-cis-undecaprenyl diphosphate = [GlcNAc-(1-&gt;4)-Mur2Ac(oyl-L-Ala-gamma-D-Glu-L-Lys-D-Ala-D-Ala)](n+1)-di-trans,octa-cis-undecaprenyl diphosphate + di-trans,octa-cis-undecaprenyl diphosphate + H(+). It participates in cell wall biogenesis; peptidoglycan biosynthesis. Its function is as follows. Peptidoglycan polymerase that catalyzes glycan chain elongation from lipid-linked precursors. This chain is Biosynthetic peptidoglycan transglycosylase, found in Pseudomonas putida (strain ATCC 700007 / DSM 6899 / JCM 31910 / BCRC 17059 / LMG 24140 / F1).